A 616-amino-acid polypeptide reads, in one-letter code: Auxin efflux carrier component 4 (616 aa).

At 1-7 the chain is on the extracellular side; it reads MITWHDL. Residues 8-28 traverse the membrane as a helical segment; that stretch reads YTVLTAVVPLYVAMILAYGSV. Residues 29 to 38 are Cytoplasmic-facing; the sequence is QWWKIFSPDQ. The helical transmembrane segment at 39-59 threads the bilayer; it reads CSGINRFVAIFAVPLLSFHFI. Residue Val51 coordinates (indol-3-yl)acetate. Over 60–70 the chain is Extracellular; sequence STNDPYAMNFR. The chain crosses the membrane as a helical span at residues 71–91; the sequence is FVAADTLQKIIMLVLLALWAN. The Cytoplasmic portion of the chain corresponds to 92-101; the sequence is LTKNGSLEWM. Residues 102–122 traverse the membrane as a helical segment; it reads ITIFSLSTLPNTLVMGIPLLI. Residues Asn112 and Leu114 each coordinate (indol-3-yl)acetate. The Extracellular portion of the chain corresponds to 123–131; the sequence is AMYGTYAGS. Residues 132–152 traverse the membrane as a helical segment; that stretch reads LMVQVVVLQCIIWYTLLLFLF. Position 145 (Tyr145) interacts with (indol-3-yl)acetate. At 153–476 the chain is on the cytoplasmic side; it reads EYRGAKLLIM…LIRNPNTYSS (324 aa). Residues Ser223, Ser240, and Ser280 each carry the phosphoserine modification. Positions 302–343 are disordered; that stretch reads AAGSYPAPNPEFSTGTGVSTKPNKIPKENQQQLQEKDSKASH. Positions 312–334 are enriched in polar residues; that stretch reads EFSTGTGVSTKPNKIPKENQQQL. Ser358 and Ser395 each carry phosphoserine. The disordered stretch occupies residues 390–411; it reads DQPRKSNARGGGDDIGGLDSGE. Residues 398–409 show a composition bias toward gly residues; the sequence is RGGGDDIGGLDS. A helical transmembrane segment spans residues 477-497; the sequence is LIGLIWALVAYRWHVAMPKIL. At 498-500 the chain is on the extracellular side; the sequence is QQS. Residues 501-521 traverse the membrane as a helical segment; the sequence is ISILSDAGLGMAMFSLGLFMA. Residues 522-535 lie on the Cytoplasmic side of the membrane; that stretch reads LQPKIIACGNSVAT. A helical transmembrane segment spans residues 536–556; that stretch reads FAMAVRFITGPAIMAVAGIAI. The Extracellular segment spans residues 557–561; the sequence is GLHGD. Residues 562–582 form a helical membrane-spanning segment; that stretch reads LLRIAIVQAALPQGIVPFVFA. Residues Ile576 and Val577 each contribute to the (indol-3-yl)acetate site. The Cytoplasmic portion of the chain corresponds to 583 to 595; sequence KEYNVHPTILSTG. A helical transmembrane segment spans residues 596-616; the sequence is VIFGMLIALPITLVYYILLGL.

The protein belongs to the auxin efflux carrier (TC 2.A.69.1) family. As to quaternary structure, homodimer. Expressed in the quiescent center precursors and surrounding cells. Present in columella cells of primary roots. Detected in pollen.

The protein resides in the cell membrane. Its function is as follows. Acts as a component of the auxin efflux carrier. Plays a role in generating a sink for auxin into columella cells. Maintains the endogenous auxin gradient, which is essential for correct root patterning. Involved in EXO70A3-regulated gravitropic responses in columella cells and in root system architecture (RSA). Together with PIN3 and PIN7, involved in the connective auxin transport (CAT) that ensures communication across the shoot system, and modulates strigolactone-mediated shoot branching control. The abcb19 pin3 pin4 pin7 quadruple mutant exhibits an additive phenotype on strigolactone-mediated bud outgrowth responses and shoot branching control. In Arabidopsis thaliana (Mouse-ear cress), this protein is Auxin efflux carrier component 4.